The chain runs to 300 residues: Probable endonuclease 4 (300 aa).

Residues His68, His109, Glu144, Asp178, His181, His213, Asp226, His228, and Glu258 each coordinate Zn(2+).

The protein belongs to the AP endonuclease 2 family. Requires Zn(2+) as cofactor.

It carries out the reaction Endonucleolytic cleavage to 5'-phosphooligonucleotide end-products.. Endonuclease IV plays a role in DNA repair. It cleaves phosphodiester bonds at apurinic or apyrimidinic (AP) sites, generating a 3'-hydroxyl group and a 5'-terminal sugar phosphate. This chain is Probable endonuclease 4, found in Latilactobacillus sakei subsp. sakei (strain 23K) (Lactobacillus sakei subsp. sakei).